Consider the following 315-residue polypeptide: Putative S-adenosyl-L-methionine-dependent methyltransferase MAV_4557 (315 aa).

Residues Asp-134 and 163-164 (DL) contribute to the S-adenosyl-L-methionine site.

This sequence belongs to the UPF0677 family.

Functionally, exhibits S-adenosyl-L-methionine-dependent methyltransferase activity. The protein is Putative S-adenosyl-L-methionine-dependent methyltransferase MAV_4557 of Mycobacterium avium (strain 104).